The primary structure comprises 156 residues: MSDSNDDRPFRPFQSQYRWPGVDLLAYKEEGSAPFRSVTRQVLFSGNGLTGELRYFEVGPGGHSTLERHQHAHGVMILKGRGHAMVGRAVSAVAPYDLVTIPGWSWHQFRAPADEALGFLCMVNAERDKPQLPTEADLAMLRADDAVAAFLDGLAG.

Residues 55-122 enclose the Cupin type-2 domain; sequence YFEVGPGGHS…ADEALGFLCM (68 aa). Glu-67, His-69, His-73, and His-107 together coordinate Mn(2+). Residue Cys-121 is part of the active site.

The catalysed reaction is S-methyl-1-thio-D-xylulose 5-phosphate + glutathione = S-(methylsulfanyl)glutathione + 1-deoxy-D-xylulose 5-phosphate. It catalyses the reaction S-(methylsulfanyl)glutathione + AH2 = methanethiol + glutathione + A. It functions in the pathway amino-acid biosynthesis; L-methionine biosynthesis via salvage pathway. It participates in metabolic intermediate biosynthesis; 1-deoxy-D-xylulose 5-phosphate biosynthesis. Functionally, catalyzes the formation of S-(methylsulfanyl)glutathione and 1-deoxy-D-xylulose 5-phosphate (DXP) from 1-methylthioxylulose 5-phosphate (MTXu-5P). The S-(methylsulfanyl)glutathione is reductively cleaved to relase methanethiol in a second reaction. Involved in the MTA-isoprenoid shunt of the methionine salvage pathway. The protein is 1-methylthio-D-xylulose 5-phosphate methylsulfurylase of Rhodospirillum rubrum (strain ATCC 11170 / ATH 1.1.1 / DSM 467 / LMG 4362 / NCIMB 8255 / S1).